The sequence spans 397 residues: Acetate kinase 2 (397 aa).

Asn-10 provides a ligand contact to Mg(2+). Lys-17 serves as a coordination point for ATP. Substrate is bound at residue Arg-90. Asp-147 functions as the Proton donor/acceptor in the catalytic mechanism. Residues 207 to 211 (HLGNG), 281 to 283 (DAR), and 329 to 333 (GIGEN) each bind ATP. Glu-385 lines the Mg(2+) pocket.

The protein belongs to the acetokinase family. In terms of assembly, homodimer. Requires Mg(2+) as cofactor. The cofactor is Mn(2+).

Its subcellular location is the cytoplasm. It carries out the reaction acetate + ATP = acetyl phosphate + ADP. It participates in metabolic intermediate biosynthesis; acetyl-CoA biosynthesis; acetyl-CoA from acetate: step 1/2. In terms of biological role, catalyzes the formation of acetyl phosphate from acetate and ATP. Can also catalyze the reverse reaction. This chain is Acetate kinase 2, found in Vibrio parahaemolyticus serotype O3:K6 (strain RIMD 2210633).